Here is a 1997-residue protein sequence, read N- to C-terminus: Otoferlin (1997 aa).

The C2 1 domain maps to 1 to 98 (MALLIHLKTV…VEESHVEVTD (98 aa)). The Cytoplasmic portion of the chain corresponds to 1–1963 (MALLIHLKTV…ARYFLWHTYR (1963 aa)). The interval 128–171 (WDDGDFLGDESLQEEEKDSQETDGLLPGSRPSSRPPGEKSFRRA) is disordered. A compositionally biased stretch (acidic residues) spans 129-145 (DDGDFLGDESLQEEEKD). C2 domains lie at 236-357 (KRSK…HKWA) and 400-531 (IEGN…FLPT). The disordered stretch occupies residues 642 to 694 (NEVDGLSRPQRPRPRKEPGDEEEVDLIQNASDDEAGDAGDLASVSSTPPMRPQ). Positions 660-678 (GDEEEVDLIQNASDDEAGD) are enriched in acidic residues. The stretch at 792 to 821 (RERLKSCMRELENMGQQARMLRAQVKRHTV) forms a coiled coil. C2 domains lie at 944 to 1069 (LHAF…PPRF) and 1115 to 1242 (DRGP…PSWN). Residues Asp976, Asp982, Asp1038, Asp1040, and Asp1046 each coordinate Ca(2+). 2 disordered regions span residues 1299-1324 (AEEE…PDES) and 1343-1405 (LRQQ…KPKI). Composition is skewed to acidic residues over residues 1314-1324 (EEPEEEEPDES) and 1352-1361 (DLEEKEEVDN). The segment covering 1370 to 1383 (KGKEKARAAKEEKK) has biased composition (basic and acidic residues). Positions 1387 to 1396 (QSSGSGQGSE) are enriched in low complexity. 2 consecutive C2 domains span residues 1464-1593 (LPED…ATCG) and 1714-1865 (DMPA…KQCT). Ca(2+)-binding residues include Asp1508, Asp1514, Asp1563, Asp1565, Asp1571, Asp1836, Ser1839, and Asp1842. A helical membrane pass occupies residues 1964-1984 (WLLLKLLLLLLLLLLLALFLY). Residues 1985–1997 (SVPGYLVKKILGA) are Extracellular-facing.

Belongs to the ferlin family. In terms of assembly, interacts with SNAP2; the interaction is direct. Interacts with STX1; the interaction is direct. Interacts with RAB8B. Ca(2+) serves as cofactor. As to expression, isoform 1 and isoform 3 are found in adult brain. Isoform 2 is expressed in the fetus and in adult brain, heart, placenta, skeletal muscle and kidney.

The protein localises to the cytoplasmic vesicle. The protein resides in the secretory vesicle. Its subcellular location is the synaptic vesicle membrane. It is found in the basolateral cell membrane. It localises to the endoplasmic reticulum membrane. The protein localises to the golgi apparatus membrane. The protein resides in the presynaptic cell membrane. Its subcellular location is the cell membrane. Its function is as follows. Key calcium ion sensor involved in the Ca(2+)-triggered synaptic vesicle-plasma membrane fusion and in the control of neurotransmitter release at these output synapses. Interacts in a calcium-dependent manner to the presynaptic SNARE proteins at ribbon synapses of cochlear inner hair cells (IHCs) to trigger exocytosis of neurotransmitter. Also essential to synaptic exocytosis in immature outer hair cells (OHCs). May also play a role within the recycling of endosomes. This chain is Otoferlin (OTOF), found in Homo sapiens (Human).